Reading from the N-terminus, the 297-residue chain is uncharacterized protein (297 aa).

2 helical membrane-spanning segments follow: residues 17 to 37 (LALSGGGFYGFAVVGALKEIF) and 48 to 68 (TISGVSVGSIIATMLAIGYSI). A PNPLA domain is found at 17–196 (LALSGGGFYG…TLNYPITLFD (180 aa)). The GXGXXG motif lies at 21–26 (GGGFYG). Positions 51–55 (GVSVG) match the GXSXG motif. Ser-53 acts as the Nucleophile in catalysis. A glycan (N-linked (GlcNAc...) asparagine; by host) is linked at Asn-122. Asp-183 serves as the catalytic Proton acceptor. A DGA/G motif is present at residues 183 to 185 (DGG). A glycan (N-linked (GlcNAc...) asparagine; by host) is linked at Asn-239.

The protein resides in the membrane. Probable lipid hydrolase. This is an uncharacterized protein from Acanthamoeba polyphaga mimivirus (APMV).